A 110-amino-acid polypeptide reads, in one-letter code: Flagellar hook-basal body complex protein FliE (110 aa).

The protein belongs to the FliE family.

The protein localises to the bacterial flagellum basal body. In Pseudomonas putida (strain W619), this protein is Flagellar hook-basal body complex protein FliE.